The sequence spans 291 residues: Mitochondrial fission factor (291 aa).

The Cytoplasmic portion of the chain corresponds to 1–271 (MAEISRIQYE…ENKERAKREM (271 aa)). Threonine 89 is subject to Phosphothreonine. A disordered region spans residues 106–134 (LERPLPTPQSEESRAVGRLKRERSMSENA). Phosphoserine is present on residues serine 129, serine 131, and serine 146. Position 149 is a phosphothreonine (threonine 149). Serine 151, serine 178, serine 182, and serine 244 each carry phosphoserine. A coiled-coil region spans residues 240-271 (VDAASLRRQIIKLNRRLQLLEEENKERAKREM). A helical; Anchor for type IV membrane protein transmembrane segment spans residues 272–289 (VMYSITVAFWLLNSWLWF). Over 290 to 291 (RR) the chain is Mitochondrial intermembrane.

It belongs to the Tango11 family. Homodimer. Interacts with DNM1L. Interacts with C11orf65/MFI; the interaction inhibits MFF interaction with DNM1L.

It is found in the mitochondrion outer membrane. It localises to the peroxisome. Its subcellular location is the cytoplasmic vesicle. The protein resides in the secretory vesicle. The protein localises to the synaptic vesicle. In terms of biological role, plays a role in mitochondrial and peroxisomal fission. Promotes the recruitment and association of the fission mediator dynamin-related protein 1 (DNM1L) to the mitochondrial surface. May be involved in regulation of synaptic vesicle membrane dynamics by recruitment of DNM1L to clathrin-containing vesicles. The polypeptide is Mitochondrial fission factor (Mff) (Mus musculus (Mouse)).